Here is a 1883-residue protein sequence, read N- to C-terminus: Lysophospholipase NTE1 (1883 aa).

The Cytoplasmic portion of the chain corresponds to 1–75 (MSQVPVASPA…LLRVVLASLN (75 aa)). Residues 76 to 96 (LIRILATFSTITVPSLVYAIL) traverse the membrane as a helical segment. The Lumenal segment spans residues 97-103 (HYSLTLQ). Residues 104 to 124 (LNFPSLALLFLTSLISAFIWL) form a helical membrane-spanning segment. Residues 125 to 1883 (RYRHLNKYER…AGISARRNSI (1759 aa)) are Cytoplasmic-facing. 6 disordered regions span residues 284 to 327 (HLAP…FNPP), 355 to 410 (ERLG…LYHA), 618 to 693 (SQRS…MVGP), 716 to 764 (SAQP…RKGS), 921 to 1069 (EEDR…ATNS), and 1084 to 1108 (LHQQ…GKRS). The span at 311–327 (NNATAPTSPYSSAFNPP) shows a compositional bias: polar residues. The segment covering 372–383 (ARTASSGTASAT) has biased composition (low complexity). Over residues 650–668 (PSLTTSSKQSNQKPTSSRI) the composition is skewed to polar residues. A nucleoside 3',5'-cyclic phosphate is bound by residues 863–1158 (AGHG…RRPI) and 1166–1285 (RLLS…IARR). Over residues 936–948 (TDASSGSSRQNRP) the composition is skewed to polar residues. The span at 964-974 (LLDERNLREAD) shows a compositional bias: basic and acidic residues. Polar residues-rich tracts occupy residues 988–998 (ISSNGDGNSGS) and 1084–1100 (LHQQ…QSSQ). Positions 1544-1708 (LVLGGGGARG…VDNLPVTVML (165 aa)) constitute a PNPLA domain. Positions 1548–1553 (GGGARG) match the GXGXXG motif. The GXSXG signature appears at 1575-1579 (GTSIG). Serine 1577 (nucleophile) is an active-site residue. Aspartate 1695 functions as the Proton acceptor in the catalytic mechanism. The DGA/G motif lies at 1695–1697 (DGG). The interval 1852-1883 (DESGVGGGVRKIRKKRRRTRRKAGISARRNSI) is disordered. The segment covering 1861-1874 (RKIRKKRRRTRRKA) has biased composition (basic residues).

The protein belongs to the NTE family.

The protein resides in the endoplasmic reticulum membrane. It catalyses the reaction a 1-acyl-sn-glycero-3-phosphocholine + H2O = sn-glycerol 3-phosphocholine + a fatty acid + H(+). Inhibited by organophosphorus esters. Its function is as follows. Intracellular phospholipase B that catalyzes the double deacylation of phosphatidylcholine (PC) to glycerophosphocholine (GroPCho). Plays an important role in membrane lipid homeostasis. Responsible for the rapid PC turnover in response to inositol, elevated temperatures, or when choline is present in the growth medium. The chain is Lysophospholipase NTE1 (NTE1) from Mycosarcoma maydis (Corn smut fungus).